Consider the following 212-residue polypeptide: 3-isopropylmalate dehydratase small subunit (212 aa).

This sequence belongs to the LeuD family. LeuD type 1 subfamily. Heterodimer of LeuC and LeuD.

The enzyme catalyses (2R,3S)-3-isopropylmalate = (2S)-2-isopropylmalate. Its pathway is amino-acid biosynthesis; L-leucine biosynthesis; L-leucine from 3-methyl-2-oxobutanoate: step 2/4. Catalyzes the isomerization between 2-isopropylmalate and 3-isopropylmalate, via the formation of 2-isopropylmaleate. The polypeptide is 3-isopropylmalate dehydratase small subunit (Laribacter hongkongensis (strain HLHK9)).